We begin with the raw amino-acid sequence, 611 residues long: Zinc metalloproteinase-disintegrin-like MTP9 (611 aa).

A signal peptide spans 1 to 20 (MIEVLLVTICFTVFPYQGSS). Residues 21-191 (IILESGNVND…DEPIEKISQL (171 aa)) constitute a propeptide that is removed on maturation. The region spanning 205 to 401 (KYIELYVVVD…VRPQCILNKP (197 aa)) is the Peptidase M12B domain. Glutamate 208 contacts Ca(2+). N-linked (GlcNAc...) asparagine glycosylation occurs at asparagine 282. Aspartate 292 contributes to the Ca(2+) binding site. Intrachain disulfides connect cysteine 316–cysteine 396, cysteine 356–cysteine 380, and cysteine 358–cysteine 363. Positions 341, 345, and 351 each coordinate Zn(2+). Ca(2+)-binding residues include cysteine 396, asparagine 399, asparagine 414, phenylalanine 416, glutamate 418, glutamate 421, and aspartate 424. The Disintegrin domain occupies 409–493 (PPVCGNYFVE…ECPTDSFQRN (85 aa)). Cystine bridges form between cysteine 412–cysteine 441, cysteine 423–cysteine 436, cysteine 425–cysteine 431, cysteine 435–cysteine 456, cysteine 447–cysteine 453, cysteine 452–cysteine 478, cysteine 465–cysteine 485, cysteine 472–cysteine 504, cysteine 497–cysteine 509, cysteine 516–cysteine 566, cysteine 531–cysteine 573, cysteine 541–cysteine 575, cysteine 544–cysteine 554, cysteine 561–cysteine 599, and cysteine 593–cysteine 604. A D/ECD-tripeptide motif is present at residues 471–473 (DCD). Residues aspartate 473, leucine 474, glutamate 476, and aspartate 488 each coordinate Ca(2+). 2 N-linked (GlcNAc...) asparagine glycosylation sites follow: asparagine 548 and asparagine 570.

The protein belongs to the venom metalloproteinase (M12B) family. P-III subfamily. Monomer. Zn(2+) is required as a cofactor. In terms of tissue distribution, expressed by the venom gland.

It is found in the secreted. Functionally, snake venom zinc metalloproteinase that may impair hemostasis in the prey. This chain is Zinc metalloproteinase-disintegrin-like MTP9, found in Drysdalia coronoides (White-lipped snake).